Reading from the N-terminus, the 936-residue chain is DNA topoisomerase 1 (936 aa).

Residues 15 to 139 (RRLVIVESPT…VKRMVFHEIT (125 aa)) enclose the Toprim domain. Positions 21 and 108 each coordinate Mg(2+). The region spanning 154–611 (DIALVDAQET…FYFGGEHGVE (458 aa)) is the Topo IA-type catalytic domain. An interaction with DNA region spans residues 188–193 (SAGRVQ). Residue Tyr339 is the O-(5'-phospho-DNA)-tyrosine intermediate of the active site. Disordered stretches follow at residues 661–688 (LERM…LTPD), 732–767 (VLPE…SLFR), 841–884 (KRRG…ETNA), and 903–936 (LLAD…AKKA). Positions 910–936 (RGPVKKKAPAKKAAKKAPAKKAAAKKA) are enriched in basic residues.

The protein belongs to the type IA topoisomerase family. Monomer. Mg(2+) serves as cofactor.

It carries out the reaction ATP-independent breakage of single-stranded DNA, followed by passage and rejoining.. Releases the supercoiling and torsional tension of DNA, which is introduced during the DNA replication and transcription, by transiently cleaving and rejoining one strand of the DNA duplex. Introduces a single-strand break via transesterification at a target site in duplex DNA. The scissile phosphodiester is attacked by the catalytic tyrosine of the enzyme, resulting in the formation of a DNA-(5'-phosphotyrosyl)-enzyme intermediate and the expulsion of a 3'-OH DNA strand. The free DNA strand then undergoes passage around the unbroken strand, thus removing DNA supercoils. Finally, in the religation step, the DNA 3'-OH attacks the covalent intermediate to expel the active-site tyrosine and restore the DNA phosphodiester backbone. In terms of biological role, relaxes negatively (but not positively) supercoiled DNA, concatanates and knots circular ssDNA at 52 but not 37 degrees Celsius. Preferentially nicks supercoiled DNA at C(G/T)CTT, cutting between the TT residues, binds ss and dsDNA with the recognition site. The sequence is that of DNA topoisomerase 1 from Mycolicibacterium smegmatis (strain ATCC 700084 / mc(2)155) (Mycobacterium smegmatis).